The chain runs to 204 residues: V-set and transmembrane domain-containing protein 2-like protein (204 aa).

Residues 1 to 24 form the signal peptide; the sequence is MGAPLAVALGALHYLALFLQLGGA. The Ig-like domain occupies 41 to 158; the sequence is ALFTETPHDM…DGKARHHKVK (118 aa). C62 and C142 are oxidised to a cystine. The tract at residues 168–204 is disordered; sequence NSVLHLPEAPPAAPAPPPPKPGKELRKRSVDQEACSL. Over residues 175–187 the composition is skewed to pro residues; sequence EAPPAAPAPPPPK. The span at 188–198 shows a compositional bias: basic and acidic residues; the sequence is PGKELRKRSVD.

The sequence is that of V-set and transmembrane domain-containing protein 2-like protein (VSTM2L) from Homo sapiens (Human).